The primary structure comprises 259 residues: Hydroxyacylglutathione hydrolase (259 aa).

Residues His56, His58, Asp60, His61, His112, Asp133, and His171 each contribute to the Zn(2+) site. The interval 220-243 (NPFLRTGETSVKEKADERSDAQNT) is disordered. Over residues 229–239 (SVKEKADERSD) the composition is skewed to basic and acidic residues.

It belongs to the metallo-beta-lactamase superfamily. Glyoxalase II family. As to quaternary structure, monomer. The cofactor is Zn(2+).

The enzyme catalyses an S-(2-hydroxyacyl)glutathione + H2O = a 2-hydroxy carboxylate + glutathione + H(+). It functions in the pathway secondary metabolite metabolism; methylglyoxal degradation; (R)-lactate from methylglyoxal: step 2/2. Functionally, thiolesterase that catalyzes the hydrolysis of S-D-lactoyl-glutathione to form glutathione and D-lactic acid. The chain is Hydroxyacylglutathione hydrolase from Pseudomonas syringae pv. syringae (strain B728a).